A 142-amino-acid chain; its full sequence is Large ribosomal subunit protein uL13 (142 aa).

This sequence belongs to the universal ribosomal protein uL13 family. As to quaternary structure, part of the 50S ribosomal subunit.

Functionally, this protein is one of the early assembly proteins of the 50S ribosomal subunit, although it is not seen to bind rRNA by itself. It is important during the early stages of 50S assembly. The sequence is that of Large ribosomal subunit protein uL13 from Ectopseudomonas mendocina (strain ymp) (Pseudomonas mendocina).